We begin with the raw amino-acid sequence, 249 residues long: Aspartate/glutamate leucyltransferase (249 aa).

This sequence belongs to the R-transferase family. Bpt subfamily.

The protein localises to the cytoplasm. The catalysed reaction is N-terminal L-glutamyl-[protein] + L-leucyl-tRNA(Leu) = N-terminal L-leucyl-L-glutamyl-[protein] + tRNA(Leu) + H(+). It carries out the reaction N-terminal L-aspartyl-[protein] + L-leucyl-tRNA(Leu) = N-terminal L-leucyl-L-aspartyl-[protein] + tRNA(Leu) + H(+). Functionally, functions in the N-end rule pathway of protein degradation where it conjugates Leu from its aminoacyl-tRNA to the N-termini of proteins containing an N-terminal aspartate or glutamate. The protein is Aspartate/glutamate leucyltransferase of Brucella suis (strain ATCC 23445 / NCTC 10510).